The primary structure comprises 417 residues: Origin of replication complex subunit 4 (417 aa).

Residue 59–66 coordinates ATP; it reads GPRGSGKA.

It belongs to the ORC4 family. As to quaternary structure, component of the origin recognition complex (ORC) composed of at least ORC1 (ORC1A or ORC1B), ORC2, ORC3, ORC4, ORC5 and ORC6. ORC is regulated in a cell-cycle and development dependent manner. It is sequentially assembled at the exit from anaphase of mitosis and disassembled as cells enter S phase. Interacts directly with ORC1A, ORC2, ORC3, ORC5 and ORC6. Follow a cell-cycle regulation with a peak at the G1/S-phase. Isoform AtORC4a is expressed at low levels ubiquitously. Isoform AtORC4b is mostly expressed in siliques, flowers and flower buds, and, to a lower exent, in roots, leaves and stems.

It is found in the nucleus. Functionally, component of the origin recognition complex (ORC) that binds origins of replication. DNA-binding is ATP-dependent. The specific DNA sequences that define origins of replication have not been identified yet. ORC is required to assemble the pre-replication complex necessary to initiate DNA replication. This chain is Origin of replication complex subunit 4, found in Arabidopsis thaliana (Mouse-ear cress).